Consider the following 324-residue polypeptide: Cuticle collagen lon-3 (324 aa).

Positions 1 to 30 are cleaved as a signal peptide; sequence MSVTTATSGALIFSGASLLVSLFAAASIYS. Residues 119–324 form a disordered region; that stretch reads VENTCPTGPD…AWRRKHKRVY (206 aa). Triple-helical region regions lie at residues 129–152, 170–229, and 235–294; these read GEEG…DGQD, GLPG…KGDD, and GRQG…SGLP. Composition is skewed to low complexity over residues 136-151, 168-181, 210-223, 235-246, and 261-273; these read PDGQ…FDGQ, PQGL…QGAP, PTGA…PGAS, GRQGQRGQPGEQ, and EGPP…VGVP. The segment covering 296–311 has biased composition (basic and acidic residues); the sequence is KDAEYCKCPTRDDGGN. The span at 314–324 shows a compositional bias: basic residues; that stretch reads RAWRRKHKRVY.

The protein belongs to the cuticular collagen family. In terms of assembly, collagen polypeptide chains are complexed within the cuticle by disulfide bonds and other types of covalent cross-links.

Functionally, nematode cuticles are composed largely of collagen-like proteins. The cuticle functions both as an exoskeleton and as a barrier to protect the worm from its environment. Dose-dependent regulator of body length and shape. The sequence is that of Cuticle collagen lon-3 (lon-3) from Caenorhabditis elegans.